We begin with the raw amino-acid sequence, 541 residues long: Membrane protein insertase YidC (541 aa).

The helical transmembrane segment at 7–27 threads the bilayer; that stretch reads ILLLALALVSFLLFQQWQVET. Positions 34–55 are enriched in polar residues; sequence TVSTVQQTHKNGDVPTSSTANS. The segment at 34-59 is disordered; it reads TVSTVQQTHKNGDVPTSSTANSDAPV. A run of 4 helical transmembrane segments spans residues 343 to 363, 418 to 438, 456 to 476, and 495 to 515; these read SFIQ…TFIV, LGGC…YWAL, LSAQ…MFLI, and FIPV…VLYW.

This sequence belongs to the OXA1/ALB3/YidC family. Type 1 subfamily. In terms of assembly, interacts with the Sec translocase complex via SecD. Specifically interacts with transmembrane segments of nascent integral membrane proteins during membrane integration.

It localises to the cell inner membrane. Functionally, required for the insertion and/or proper folding and/or complex formation of integral membrane proteins into the membrane. Involved in integration of membrane proteins that insert both dependently and independently of the Sec translocase complex, as well as at least some lipoproteins. Aids folding of multispanning membrane proteins. This chain is Membrane protein insertase YidC, found in Aliivibrio salmonicida (strain LFI1238) (Vibrio salmonicida (strain LFI1238)).